The chain runs to 366 residues: Alanine racemase (366 aa).

Lys40 functions as the Proton acceptor; specific for D-alanine in the catalytic mechanism. Lys40 carries the post-translational modification N6-(pyridoxal phosphate)lysine. A substrate-binding site is contributed by Arg136. The Proton acceptor; specific for L-alanine role is filled by Tyr263. Met310 contributes to the substrate binding site.

The protein belongs to the alanine racemase family. Requires pyridoxal 5'-phosphate as cofactor.

It catalyses the reaction L-alanine = D-alanine. It participates in amino-acid biosynthesis; D-alanine biosynthesis; D-alanine from L-alanine: step 1/1. In terms of biological role, catalyzes the interconversion of L-alanine and D-alanine. May also act on other amino acids. This chain is Alanine racemase (alr), found in Streptococcus pyogenes serotype M2 (strain MGAS10270).